We begin with the raw amino-acid sequence, 89 residues long: Small ribosomal subunit protein uS15 (89 aa).

Belongs to the universal ribosomal protein uS15 family. As to quaternary structure, part of the 30S ribosomal subunit. Forms a bridge to the 50S subunit in the 70S ribosome, contacting the 23S rRNA.

One of the primary rRNA binding proteins, it binds directly to 16S rRNA where it helps nucleate assembly of the platform of the 30S subunit by binding and bridging several RNA helices of the 16S rRNA. Functionally, forms an intersubunit bridge (bridge B4) with the 23S rRNA of the 50S subunit in the ribosome. The sequence is that of Small ribosomal subunit protein uS15 from Geobacillus sp. (strain WCH70).